Reading from the N-terminus, the 482-residue chain is tRNA sulfurtransferase (482 aa).

Residues 61–165 (LAIRDALTRI…DDRLLLIKGR (105 aa)) enclose the THUMP domain. ATP is bound by residues 183–184 (LI), Lys-265, Gly-287, and Gln-296. A disulfide bridge links Cys-344 with Cys-456. Positions 404 to 482 (FGPNDVILDI…GFNNVKVYRP (79 aa)) constitute a Rhodanese domain. Catalysis depends on Cys-456, which acts as the Cysteine persulfide intermediate.

This sequence belongs to the ThiI family.

The protein resides in the cytoplasm. The catalysed reaction is [ThiI sulfur-carrier protein]-S-sulfanyl-L-cysteine + a uridine in tRNA + 2 reduced [2Fe-2S]-[ferredoxin] + ATP + H(+) = [ThiI sulfur-carrier protein]-L-cysteine + a 4-thiouridine in tRNA + 2 oxidized [2Fe-2S]-[ferredoxin] + AMP + diphosphate. The enzyme catalyses [ThiS sulfur-carrier protein]-C-terminal Gly-Gly-AMP + S-sulfanyl-L-cysteinyl-[cysteine desulfurase] + AH2 = [ThiS sulfur-carrier protein]-C-terminal-Gly-aminoethanethioate + L-cysteinyl-[cysteine desulfurase] + A + AMP + 2 H(+). The protein operates within cofactor biosynthesis; thiamine diphosphate biosynthesis. Functionally, catalyzes the ATP-dependent transfer of a sulfur to tRNA to produce 4-thiouridine in position 8 of tRNAs, which functions as a near-UV photosensor. Also catalyzes the transfer of sulfur to the sulfur carrier protein ThiS, forming ThiS-thiocarboxylate. This is a step in the synthesis of thiazole, in the thiamine biosynthesis pathway. The sulfur is donated as persulfide by IscS. This is tRNA sulfurtransferase from Escherichia coli O127:H6 (strain E2348/69 / EPEC).